The following is a 63-amino-acid chain: Hyphancin-3D (63 aa).

A signal peptide spans 1 to 22 (MNFSRIIFLVFACFVALASVSA). A propeptide spans 23 to 26 (APEP) (removed by a dipeptidylpeptidase). Position 61 is a leucine amide (Leu-61).

It belongs to the cecropin family.

It localises to the secreted. Has antibacterial activity. The sequence is that of Hyphancin-3D from Hyphantria cunea (Fall webworm moth).